The following is a 179-amino-acid chain: Repressor of phase 1 flagellin gene (179 aa).

Functionally, transcriptional repressor of the FliC phase-1 flagellin. In Salmonella abony, this protein is Repressor of phase 1 flagellin gene (fljA).